Consider the following 368-residue polypeptide: tRNA-specific 2-thiouridylase MnmA (368 aa).

ATP contacts are provided by residues 11–18 (GMSGGVDS) and methionine 37. An interaction with target base in tRNA region spans residues 97–99 (NPD). Residue cysteine 102 is the Nucleophile of the active site. An intrachain disulfide couples cysteine 102 to cysteine 199. Residue glycine 127 coordinates ATP. The interaction with tRNA stretch occupies residues 149-151 (KDQ). Cysteine 199 serves as the catalytic Cysteine persulfide intermediate. The tract at residues 311–312 (RY) is interaction with tRNA.

The protein belongs to the MnmA/TRMU family. Interacts with TusE.

Its subcellular location is the cytoplasm. It catalyses the reaction S-sulfanyl-L-cysteinyl-[protein] + uridine(34) in tRNA + AH2 + ATP = 2-thiouridine(34) in tRNA + L-cysteinyl-[protein] + A + AMP + diphosphate + H(+). Its function is as follows. Catalyzes the 2-thiolation of uridine at the wobble position (U34) of tRNA(Lys), tRNA(Glu) and tRNA(Gln), leading to the formation of s(2)U34, the first step of tRNA-mnm(5)s(2)U34 synthesis. Sulfur is provided by IscS, via a sulfur-relay system. Binds ATP and its substrate tRNAs. The sequence is that of tRNA-specific 2-thiouridylase MnmA from Shigella dysenteriae serotype 1 (strain Sd197).